Here is a 529-residue protein sequence, read N- to C-terminus: Bifunctional purine biosynthesis protein PurH (529 aa).

Residues 1–148 form the MGS-like domain; the sequence is MQQRRPVRRA…KNHKDVAIVV (148 aa).

Belongs to the PurH family.

The catalysed reaction is (6R)-10-formyltetrahydrofolate + 5-amino-1-(5-phospho-beta-D-ribosyl)imidazole-4-carboxamide = 5-formamido-1-(5-phospho-D-ribosyl)imidazole-4-carboxamide + (6S)-5,6,7,8-tetrahydrofolate. The enzyme catalyses IMP + H2O = 5-formamido-1-(5-phospho-D-ribosyl)imidazole-4-carboxamide. It participates in purine metabolism; IMP biosynthesis via de novo pathway; 5-formamido-1-(5-phospho-D-ribosyl)imidazole-4-carboxamide from 5-amino-1-(5-phospho-D-ribosyl)imidazole-4-carboxamide (10-formyl THF route): step 1/1. Its pathway is purine metabolism; IMP biosynthesis via de novo pathway; IMP from 5-formamido-1-(5-phospho-D-ribosyl)imidazole-4-carboxamide: step 1/1. The chain is Bifunctional purine biosynthesis protein PurH from Klebsiella pneumoniae (strain 342).